The chain runs to 398 residues: Histidinol-phosphate aminotransferase (398 aa).

Residues M1 to P10 are compositionally biased toward polar residues. The segment at M1–P30 is disordered. K234 carries the N6-(pyridoxal phosphate)lysine modification.

The protein belongs to the class-II pyridoxal-phosphate-dependent aminotransferase family. Histidinol-phosphate aminotransferase subfamily. Homodimer. The cofactor is pyridoxal 5'-phosphate.

The catalysed reaction is L-histidinol phosphate + 2-oxoglutarate = 3-(imidazol-4-yl)-2-oxopropyl phosphate + L-glutamate. Its pathway is amino-acid biosynthesis; L-histidine biosynthesis; L-histidine from 5-phospho-alpha-D-ribose 1-diphosphate: step 7/9. The protein is Histidinol-phosphate aminotransferase of Mycolicibacterium paratuberculosis (strain ATCC BAA-968 / K-10) (Mycobacterium paratuberculosis).